Reading from the N-terminus, the 118-residue chain is NLYQFKNMIHCTVPSRPWWHFADYGCYCGRGGKGTAVDDLDRCCQVHDNCYGEAEKLGCWPYLTLYKYECSQGKLTCSGGNNKCAAAVCNCDLVAANCFAGARYIDANYNINLKERCQ.

Intrachain disulfides connect cysteine 11–cysteine 70, cysteine 26–cysteine 117, cysteine 28–cysteine 44, cysteine 43–cysteine 98, cysteine 50–cysteine 91, cysteine 59–cysteine 84, and cysteine 77–cysteine 89. Ca(2+)-binding residues include tyrosine 27, glycine 29, and glycine 31. Residue histidine 47 is part of the active site. Residue aspartate 48 participates in Ca(2+) binding. The active site involves aspartate 92.

Belongs to the phospholipase A2 family. Group I subfamily. D49 sub-subfamily. Ca(2+) is required as a cofactor. Expressed by the venom gland.

It localises to the secreted. It carries out the reaction a 1,2-diacyl-sn-glycero-3-phosphocholine + H2O = a 1-acyl-sn-glycero-3-phosphocholine + a fatty acid + H(+). Its function is as follows. Snake venom phospholipase A2 (PLA2) that causes myonecrosis when injected intramuscularly, causes neuromuscular blockade with a gradual contracture and a decreased sensitivity to ACh and KCl (in the chick biventer cervicis nerve-muscle preparation), abolishes twitches evoked by indirect stimulation earlier than those by direct stimulation (in the mouse phrenic nerve-diaphragm preparation), shows indirect hemolytic activity, and shows weak anticoagulant activity. PLA2 catalyzes the calcium-dependent hydrolysis of the 2-acyl groups in 3-sn-phosphoglycerides. The protein is Basic phospholipase A2 CM-II of Naja mossambica (Mozambique spitting cobra).